We begin with the raw amino-acid sequence, 259 residues long: Proteasome subunit alpha (259 aa).

A disordered region spans residues 226–259 (LAEGSATSATSATPGEAEAPATAPEGDVDTGSNG). Positions 227–250 (AEGSATSATSATPGEAEAPATAPE) are enriched in low complexity.

It belongs to the peptidase T1A family. As to quaternary structure, the 20S proteasome core is composed of 14 alpha and 14 beta subunits that assemble into four stacked heptameric rings, resulting in a barrel-shaped structure. The two inner rings, each composed of seven catalytic beta subunits, are sandwiched by two outer rings, each composed of seven alpha subunits. The catalytic chamber with the active sites is on the inside of the barrel. Has a gated structure, the ends of the cylinder being occluded by the N-termini of the alpha-subunits. Is capped by the proteasome-associated ATPase, ARC.

Its subcellular location is the cytoplasm. It functions in the pathway protein degradation; proteasomal Pup-dependent pathway. With respect to regulation, the formation of the proteasomal ATPase ARC-20S proteasome complex, likely via the docking of the C-termini of ARC into the intersubunit pockets in the alpha-rings, may trigger opening of the gate for substrate entry. Interconversion between the open-gate and close-gate conformations leads to a dynamic regulation of the 20S proteasome proteolysis activity. Component of the proteasome core, a large protease complex with broad specificity involved in protein degradation. This chain is Proteasome subunit alpha, found in Streptosporangium roseum (strain ATCC 12428 / DSM 43021 / JCM 3005 / KCTC 9067 / NCIMB 10171 / NRRL 2505 / NI 9100).